The primary structure comprises 753 residues: Replication restart protein PriA (753 aa).

Residues 228–395 (SLITTKFQTC…LSKKYTLSVL (168 aa)) enclose the Helicase ATP-binding domain. Residue 241–248 (GVTGSGKT) coordinates ATP. Residues 337–340 (DEEH) carry the DEAH box motif. Residues C458, C461, C467, C470, C485, C488, C499, and C502 each coordinate Zn(2+). Residues 491 to 646 (RLSKPITSCP…DFPAFYKEEI (156 aa)) enclose the Helicase C-terminal domain.

The protein belongs to the helicase family. PriA subfamily. As to quaternary structure, component of the replication restart primosome. It depends on Zn(2+) as a cofactor.

The enzyme catalyses Couples ATP hydrolysis with the unwinding of duplex DNA by translocating in the 3'-5' direction.. It catalyses the reaction ATP + H2O = ADP + phosphate + H(+). In terms of biological role, initiates the restart of stalled replication forks, which reloads the replicative helicase on sites other than the origin of replication. Recognizes and binds to abandoned replication forks and remodels them to uncover a helicase loading site. Promotes assembly of the primosome at these replication forks. The protein is Replication restart protein PriA of Chlamydia muridarum (strain MoPn / Nigg).